The sequence spans 271 residues: Putative mitochondrial carrier protein PET8 (271 aa).

3 Solcar repeats span residues Ser3–Gln76, Ala91–Lys177, and Val187–Leu270. The next 6 helical transmembrane spans lie at Leu6 to Ile26, Gly51 to Asp71, Met97 to Ile117, Gly152 to Phe168, Ala193 to Leu213, and Met251 to Phe271.

Belongs to the mitochondrial carrier (TC 2.A.29) family.

The protein localises to the mitochondrion inner membrane. This is Putative mitochondrial carrier protein PET8 (PET8) from Eremothecium gossypii (strain ATCC 10895 / CBS 109.51 / FGSC 9923 / NRRL Y-1056) (Yeast).